Here is a 656-residue protein sequence, read N- to C-terminus: Replication protein A 70 kDa DNA-binding subunit A (656 aa).

The segment at residues 225–307 (AIKARVTAKG…NHLNNEWEIL (83 aa)) is a DNA-binding region (OB). The C4-type zinc finger occupies 516 to 542 (CPNMIGDRQCNKKVTKSTNGNWTCDKC).

The protein belongs to the replication factor A protein 1 family. As to quaternary structure, heterotrimer of RPA1, RPA2 and RPA3 (canonical replication protein A complex). Interacts with RPA2B. As to expression, expressed in root tips, roots, shoot apical meristem (SAM), young leaves, flag leaves and ears, and at lower levels in mature leaves.

The protein localises to the nucleus. Component of the replication protein A complex (RPA) required for DNA recombination, repair and replication. The activity of RPA is mediated by single-stranded DNA binding and protein interactions. Plays an essential role in meiotic and somatic DNA repair, but is dispensable for DNA replication and homologous recombination. Is essential for normal progression through meiosis in pollen mother cells. Is involved in repair of double-strand DNA breaks (DSBs) induced by genotoxic stresses. This is Replication protein A 70 kDa DNA-binding subunit A (RPA1A) from Oryza sativa subsp. japonica (Rice).